The primary structure comprises 234 residues: Gene 53 protein (234 aa).

This is Gene 53 protein (53) from Mycobacterium phage L5 (Mycobacteriophage L5).